We begin with the raw amino-acid sequence, 945 residues long: Isoleucine--tRNA ligase (945 aa).

A 'HIGH' region motif is present at residues 66–76 (PYANGDIHLGH). Position 581 (Glu-581) interacts with L-isoleucyl-5'-AMP. The 'KMSKS' region motif lies at 622–626 (KMSKS). Lys-625 contacts ATP. Residues Cys-908, Cys-911, Cys-928, and Cys-931 each contribute to the Zn(2+) site.

It belongs to the class-I aminoacyl-tRNA synthetase family. IleS type 1 subfamily. As to quaternary structure, monomer. Zn(2+) serves as cofactor.

It is found in the cytoplasm. The catalysed reaction is tRNA(Ile) + L-isoleucine + ATP = L-isoleucyl-tRNA(Ile) + AMP + diphosphate. In terms of biological role, catalyzes the attachment of isoleucine to tRNA(Ile). As IleRS can inadvertently accommodate and process structurally similar amino acids such as valine, to avoid such errors it has two additional distinct tRNA(Ile)-dependent editing activities. One activity is designated as 'pretransfer' editing and involves the hydrolysis of activated Val-AMP. The other activity is designated 'posttransfer' editing and involves deacylation of mischarged Val-tRNA(Ile). This chain is Isoleucine--tRNA ligase, found in Paraburkholderia phytofirmans (strain DSM 17436 / LMG 22146 / PsJN) (Burkholderia phytofirmans).